The primary structure comprises 365 residues: MIYNFGAGPSVLPKEVLKKVQEELLDFEKSGMSVMEISHRSKSFQEVIDEAQNNLRDLMSIPQNYKILFLQGGASTQFSMIPMNLALGKKAYYAISGAFGKKAYDEAVKLSQTLDFEAISLGSTQSEYYNHLLKIDTSKVDEKMAAYLHITTNNTIEGTTIFPENLPEVNSVPLIADMSSNILAVDYDVSKFGLIYAGAQKNLGIAGLTIVIIREDLLNQKESLSSMMDYRILAQNGSMYNTPPTFAIYLAGLVFKWVKEQGGVKKLEAINHQKARMLYDLIDQSDFYQSPVLNKVERSICNVVFTSPSKELDALFVQKAEEKGFKSIKGHRSVGGMRASIYNAFPIEGVLELVKFMKKFEEENK.

Arg-40 provides a ligand contact to L-glutamate. Residues 74–75 (AS), Phe-99, Thr-155, Asp-177, and Gln-200 each bind pyridoxal 5'-phosphate. At Lys-201 the chain carries N6-(pyridoxal phosphate)lysine. 241 to 242 (NT) serves as a coordination point for pyridoxal 5'-phosphate.

This sequence belongs to the class-V pyridoxal-phosphate-dependent aminotransferase family. SerC subfamily. As to quaternary structure, homodimer. Pyridoxal 5'-phosphate serves as cofactor.

Its subcellular location is the cytoplasm. It catalyses the reaction O-phospho-L-serine + 2-oxoglutarate = 3-phosphooxypyruvate + L-glutamate. The enzyme catalyses 4-(phosphooxy)-L-threonine + 2-oxoglutarate = (R)-3-hydroxy-2-oxo-4-phosphooxybutanoate + L-glutamate. The protein operates within amino-acid biosynthesis; L-serine biosynthesis; L-serine from 3-phospho-D-glycerate: step 2/3. Catalyzes the reversible conversion of 3-phosphohydroxypyruvate to phosphoserine and of 3-hydroxy-2-oxo-4-phosphonooxybutanoate to phosphohydroxythreonine. The protein is Phosphoserine aminotransferase of Lactococcus lactis subsp. cremoris (strain MG1363).